Reading from the N-terminus, the 147-residue chain is UPF0460 protein in nifX-nifW intergenic region (147 aa).

The protein belongs to the UPF0460 family.

This is UPF0460 protein in nifX-nifW intergenic region from Frankia alni.